The following is a 220-amino-acid chain: MDLLFGRRKTPEELLRQNQRALTRAMRELDRERQKLEAQEKKIIIDIKKMAKQGQMDAVKIMAKDLVRTRRYVKKFITMRANVQAVSLKIQTLKSNNSMALAMKGVTKAMATMNRQLKLPQIQKIMMEFEKQAGIMDMKEELMNDAIDDAMGDEDDEEESDAVVSQVLDELGLNLTDELATLPPPGGSLAAGEGRAAEAAAALADADADLEERLKNLRRD.

M1 bears the N-acetylmethionine mark. 2 coiled-coil regions span residues 12 to 52 (EELL…KMAK) and 195 to 220 (RAAEAAAALADADADLEERLKNLRRD). An MIT-interacting motif motif is present at residues 208 to 218 (ADLEERLKNLR).

It belongs to the SNF7 family. As to quaternary structure, probable core component of the endosomal sorting required for transport complex III (ESCRT-III). ESCRT-III components are thought to multimerize to form a flat lattice on the perimeter membrane of the endosome.

Its subcellular location is the late endosome membrane. It is found in the cytoplasm. In terms of biological role, probable core component of the endosomal sorting required for transport complex III (ESCRT-III) which is involved in multivesicular bodies (MVBs) formation and sorting of endosomal cargo proteins into MVBs. MVBs contain intraluminal vesicles (ILVs) that are generated by invagination and scission from the limiting membrane of the endosome and mostly are delivered to lysosomes enabling degradation of membrane proteins, such as stimulated growth factor receptors, lysosomal enzymes and lipids. The polypeptide is Charged multivesicular body protein 2a (CHMP2A) (Gallus gallus (Chicken)).